The sequence spans 393 residues: Carbamoyl phosphate synthase small chain (393 aa).

Positions 1–194 are CPSase; that stretch reads MSKDTTTYQG…TYVIEAEGEE (194 aa). Positions 61, 245, and 247 each coordinate L-glutamine. In terms of domain architecture, Glutamine amidotransferase type-1 spans 195 to 390; sequence RHTVVAYDLG…VELMDADAQK (196 aa). The Nucleophile role is filled by Cys-273. 5 residues coordinate L-glutamine: Phe-274, Gln-277, Asn-315, Gly-317, and Phe-318. Active-site residues include His-363 and Glu-365.

The protein belongs to the CarA family. In terms of assembly, composed of two chains; the small (or glutamine) chain promotes the hydrolysis of glutamine to ammonia, which is used by the large (or ammonia) chain to synthesize carbamoyl phosphate. Tetramer of heterodimers (alpha,beta)4.

It carries out the reaction hydrogencarbonate + L-glutamine + 2 ATP + H2O = carbamoyl phosphate + L-glutamate + 2 ADP + phosphate + 2 H(+). The enzyme catalyses L-glutamine + H2O = L-glutamate + NH4(+). It participates in amino-acid biosynthesis; L-arginine biosynthesis; carbamoyl phosphate from bicarbonate: step 1/1. Its pathway is pyrimidine metabolism; UMP biosynthesis via de novo pathway; (S)-dihydroorotate from bicarbonate: step 1/3. Its function is as follows. Small subunit of the glutamine-dependent carbamoyl phosphate synthetase (CPSase). CPSase catalyzes the formation of carbamoyl phosphate from the ammonia moiety of glutamine, carbonate, and phosphate donated by ATP, constituting the first step of 2 biosynthetic pathways, one leading to arginine and/or urea and the other to pyrimidine nucleotides. The small subunit (glutamine amidotransferase) binds and cleaves glutamine to supply the large subunit with the substrate ammonia. The polypeptide is Carbamoyl phosphate synthase small chain (Corynebacterium glutamicum (strain ATCC 13032 / DSM 20300 / JCM 1318 / BCRC 11384 / CCUG 27702 / LMG 3730 / NBRC 12168 / NCIMB 10025 / NRRL B-2784 / 534)).